Consider the following 258-residue polypeptide: Imidazole glycerol phosphate synthase subunit HisF (258 aa).

Catalysis depends on residues aspartate 11 and aspartate 130.

The protein belongs to the HisA/HisF family. Heterodimer of HisH and HisF.

Its subcellular location is the cytoplasm. It catalyses the reaction 5-[(5-phospho-1-deoxy-D-ribulos-1-ylimino)methylamino]-1-(5-phospho-beta-D-ribosyl)imidazole-4-carboxamide + L-glutamine = D-erythro-1-(imidazol-4-yl)glycerol 3-phosphate + 5-amino-1-(5-phospho-beta-D-ribosyl)imidazole-4-carboxamide + L-glutamate + H(+). The protein operates within amino-acid biosynthesis; L-histidine biosynthesis; L-histidine from 5-phospho-alpha-D-ribose 1-diphosphate: step 5/9. Functionally, IGPS catalyzes the conversion of PRFAR and glutamine to IGP, AICAR and glutamate. The HisF subunit catalyzes the cyclization activity that produces IGP and AICAR from PRFAR using the ammonia provided by the HisH subunit. The chain is Imidazole glycerol phosphate synthase subunit HisF from Shigella boydii serotype 4 (strain Sb227).